Reading from the N-terminus, the 461-residue chain is Regulatory protein AtoC (461 aa).

Residues R6–L120 enclose the Response regulatory domain. Residue D55 is modified to 4-aspartylphosphate. H73 is subject to Phosphohistidine. The 230-residue stretch at I145–V374 folds into the Sigma-54 factor interaction domain. ATP-binding positions include G173 to E180 and A236 to E245. The segment at residues R433–Q452 is a DNA-binding region (H-T-H motif).

Phosphorylated by AtoS. Contains two phosphorylation sites, which are both involved in the transduction of the acetoacetate signal. Asp-55 is probably the primary phosphorylation site, but either both residues can be phosphorylated independently by AtoS or the phosphate group can be transferred between them. In terms of processing, the N-terminus is blocked.

The protein localises to the cytoplasm. Member of the two-component regulatory system AtoS/AtoC. In the presence of acetoacetate, AtoS/AtoC stimulates the expression of the atoDAEB operon, leading to short chain fatty acid catabolism and activation of the poly-(R)-3-hydroxybutyrate (cPHB) biosynthetic pathway. Also induces the operon in response to spermidine. Involved in the regulation of motility and chemotaxis, via transcriptional induction of the flagellar regulon. AtoC acts by binding directly to the promoter region of the target genes. In addition to its role as a transcriptional regulator, functions as a post-translational regulator that inhibits polyamine biosynthesis via regulation of ornithine decarboxylase (ODC). In Escherichia coli (strain K12), this protein is Regulatory protein AtoC (atoC).